A 258-amino-acid chain; its full sequence is Kallikrein-1 (258 aa).

A signal peptide spans 1 to 18 (MWFLVLCLALSLGGTGAA). Positions 19-24 (PPIQSR) are cleaved as a propeptide — activation peptide. One can recognise a Peptidase S1 domain in the interval 25–255 (IVGGWECSQP…YVKWIEDTIA (231 aa)). 5 cysteine pairs are disulfide-bonded: C31-C170, C47-C63, C149-C216, C181-C195, and C206-C231. H62 acts as the Charge relay system in catalysis. O-linked (GalNAc...) serine glycosylation occurs at S90. Residue N99 is glycosylated (N-linked (GlcNAc...) asparagine). S101 is a glycosylation site (O-linked (GalNAc...) serine). The N-linked (GlcNAc...) asparagine glycan is linked to N105. The Charge relay system role is filled by D117. N-linked (GlcNAc...) asparagine glycosylation is present at N161. S163 is a glycosylation site (O-linked (GalNAc...) serine). Catalysis depends on S210, which acts as the Charge relay system.

The protein belongs to the peptidase S1 family. Kallikrein subfamily.

It catalyses the reaction Preferential cleavage of Arg-|-Xaa bonds in small molecule substrates. Highly selective action to release kallidin (lysyl-bradykinin) from kininogen involves hydrolysis of Met-|-Xaa or Leu-|-Xaa.. Functionally, glandular kallikreins cleave Met-Lys and Arg-Ser bonds in kininogen to release Lys-bradykinin. The protein is Kallikrein-1 (KLK1) of Papio hamadryas (Hamadryas baboon).